A 352-amino-acid chain; its full sequence is Chorismate synthase (352 aa).

Arginine 48 contributes to the NADP(+) binding site. Residues 125–127 (RSS), 237–238 (NA), glycine 278, 293–297 (KPTSS), and arginine 319 each bind FMN.

It belongs to the chorismate synthase family. In terms of assembly, homotetramer. FMNH2 serves as cofactor.

The catalysed reaction is 5-O-(1-carboxyvinyl)-3-phosphoshikimate = chorismate + phosphate. It participates in metabolic intermediate biosynthesis; chorismate biosynthesis; chorismate from D-erythrose 4-phosphate and phosphoenolpyruvate: step 7/7. In terms of biological role, catalyzes the anti-1,4-elimination of the C-3 phosphate and the C-6 proR hydrogen from 5-enolpyruvylshikimate-3-phosphate (EPSP) to yield chorismate, which is the branch point compound that serves as the starting substrate for the three terminal pathways of aromatic amino acid biosynthesis. This reaction introduces a second double bond into the aromatic ring system. In Francisella tularensis subsp. tularensis (strain FSC 198), this protein is Chorismate synthase.